We begin with the raw amino-acid sequence, 538 residues long: Methionine--tRNA ligase (538 aa).

The 'HIGH' region motif lies at Y21–H31. Zn(2+)-binding residues include C137, C140, C162, and H165. The 'KMSKS' region signature appears at K313–S317. K316 contacts ATP.

The protein belongs to the class-I aminoacyl-tRNA synthetase family. MetG type 2A subfamily. As to quaternary structure, monomer. The cofactor is Zn(2+).

It is found in the cytoplasm. The catalysed reaction is tRNA(Met) + L-methionine + ATP = L-methionyl-tRNA(Met) + AMP + diphosphate. Functionally, is required not only for elongation of protein synthesis but also for the initiation of all mRNA translation through initiator tRNA(fMet) aminoacylation. This chain is Methionine--tRNA ligase, found in Streptomyces coelicolor (strain ATCC BAA-471 / A3(2) / M145).